A 308-amino-acid chain; its full sequence is uncharacterized protein (308 aa).

The region spanning 6 to 234 is the ABC transporter domain; that stretch reads LHIEGLDKKI…TEKAIIEVQP (229 aa). Residue 38 to 45 participates in ATP binding; the sequence is GPNGSGKT.

Belongs to the ABC transporter superfamily.

This is an uncharacterized protein from Bacillus subtilis (strain 168).